A 549-amino-acid chain; its full sequence is Probable protein kinase UbiB (549 aa).

Positions 123-501 (DFDDVPLASA…QHKAHKSNYL (379 aa)) constitute a Protein kinase domain. ATP-binding positions include 129 to 137 (LASASIAQV) and Lys152. The active-site Proton acceptor is the Asp287. The next 2 helical transmembrane spans lie at 498-517 (SNYLLITSAVFVICGTILFT) and 521-540 (TLWASLLCLGTGAGLWLLGW).

It belongs to the ABC1 family. UbiB subfamily.

It is found in the cell inner membrane. It functions in the pathway cofactor biosynthesis; ubiquinone biosynthesis [regulation]. Functionally, is probably a protein kinase regulator of UbiI activity which is involved in aerobic coenzyme Q (ubiquinone) biosynthesis. The polypeptide is Probable protein kinase UbiB (Shewanella denitrificans (strain OS217 / ATCC BAA-1090 / DSM 15013)).